We begin with the raw amino-acid sequence, 543 residues long: Protein lin-14 (543 aa).

Disordered regions lie at residues 165–228 and 268–291; these read PNGH…SSNH and APAT…PRKP. The span at 177-213 shows a compositional bias: polar residues; the sequence is SMQTDEQQVKWSSPSSVDSNGQKTDSSAASAGDNQNI. The span at 268–282 shows a compositional bias: low complexity; sequence APATNGTTNGATKAA.

Post-translationally, cleaved by caspase ced-3 in vitro.

The protein resides in the nucleus. In terms of biological role, heterochronic protein which controls the choice of stage specific cell fates. Involved in the temporal progression of vulval fate patterning, possibly by inhibiting lin-12. Acts as a transcription factor involved in the stage-specific repression of insulin/insulin-like growth factor gene ins-33. The chain is Protein lin-14 (lin-14) from Caenorhabditis briggsae.